A 386-amino-acid chain; its full sequence is Succinate--CoA ligase [ADP-forming] subunit beta (386 aa).

Residues 9–244 enclose the ATP-grasp domain; the sequence is KELFANYGVP…LDEEEPLEVE (236 aa). ATP-binding positions include lysine 46, 53-55, glutamate 99, leucine 102, and glutamate 107; that span reads GRG. Residues asparagine 199 and aspartate 213 each contribute to the Mg(2+) site. Substrate contacts are provided by residues asparagine 264 and 321-323; that span reads GIL.

This sequence belongs to the succinate/malate CoA ligase beta subunit family. As to quaternary structure, heterotetramer of two alpha and two beta subunits. The cofactor is Mg(2+).

The catalysed reaction is succinate + ATP + CoA = succinyl-CoA + ADP + phosphate. It carries out the reaction GTP + succinate + CoA = succinyl-CoA + GDP + phosphate. It participates in carbohydrate metabolism; tricarboxylic acid cycle; succinate from succinyl-CoA (ligase route): step 1/1. Functionally, succinyl-CoA synthetase functions in the citric acid cycle (TCA), coupling the hydrolysis of succinyl-CoA to the synthesis of either ATP or GTP and thus represents the only step of substrate-level phosphorylation in the TCA. The beta subunit provides nucleotide specificity of the enzyme and binds the substrate succinate, while the binding sites for coenzyme A and phosphate are found in the alpha subunit. The polypeptide is Succinate--CoA ligase [ADP-forming] subunit beta (Desulfatibacillum aliphaticivorans).